Here is a 172-residue protein sequence, read N- to C-terminus: RNA pyrophosphohydrolase (172 aa).

Positions 6–149 (GYRPNVGIIL…KRDVYRMALK (144 aa)) constitute a Nudix hydrolase domain. The Nudix box signature appears at 38–59 (GGIKYGESPEQAMYRELMEEVG).

Belongs to the Nudix hydrolase family. RppH subfamily. Requires a divalent metal cation as cofactor.

Accelerates the degradation of transcripts by removing pyrophosphate from the 5'-end of triphosphorylated RNA, leading to a more labile monophosphorylated state that can stimulate subsequent ribonuclease cleavage. The chain is RNA pyrophosphohydrolase from Methylobacillus flagellatus (strain ATCC 51484 / DSM 6875 / VKM B-1610 / KT).